We begin with the raw amino-acid sequence, 765 residues long: Carboxysome assembly protein CsoS2 (765 aa).

Positions 1–22 are enriched in basic and acidic residues; sequence MSTKTSREIALERRKAMSDGGK. Disordered stretches follow at residues 1–107 and 165–229; these read MSTK…RTDV and REAQ…NKNG. The interval 1–215 is N-terminal domain; the sequence is MSTKTSREIA…RSKTGSTSKQ (215 aa). One copy of the N-repeat 1 repeat lies at 7-22; sequence REIALERRKAMSDGGK. Residues 38-63 show a composition bias toward polar residues; the sequence is SQDINSTGATSSNKKVLTSPSKSNIP. Residues 77–87 show a composition bias toward basic and acidic residues; it reads SSKELGIERRK. N-repeat repeat units follow at residues 79 to 94, 158 to 173, and 196 to 211; these read KELG…THGK, RDIV…KHGK, and REIS…KTGS. Positions 187 to 207 are enriched in basic and acidic residues; the sequence is RRGDPDLSSREISQRVRELRS. The middle region stretch occupies residues 216–586; that stretch reads GNGKCRPCGP…LSNCETPPND (371 aa). M-repeat repeat units follow at residues 240-289, 300-349, 358-397, 411-460, 470-519, and 530-580; these read KVGK…GQFC, RASV…KKYC, KVMQ…GDQY, KVGS…EKFC, KVGL…NDNC, and RATV…LSNC. 2 disordered regions span residues 306 to 328 and 367 to 413; these read TTSG…GDEP and GLKV…EKVG. Residues 589 to 734 are C-terminal domain; sequence YANQEKSASN…AMPPVDNKRN (146 aa). 2 C-repeat repeats span residues 604–648 and 677–711; these read SVNS…GTEQ and KKEP…EGVS. Disordered stretches follow at residues 611-637 and 656-765; these read EKYS…GPFD and NMTY…GARG. Positions 730–741 are enriched in basic and acidic residues; sequence DNKRNDETEKPD. The interval 735–765 is C-terminal peptide; that stretch reads DETEKPDFLITGSSGNTRDGQLVTFSGGARG.

The protein belongs to the CsoS2 family. Probably interacts with the carboxysome major shell protein CsoS1 via the N-terminal domain. A CsoS1-CsoS1D-CsoS2 complex can be isolated following expression in E.coli. Interacts via its N-terminal repeats with RuBisCO. In terms of processing, unlike H.neapolitanus and predictions for P.marinus strain MIT 9313, this protein is not thought to have ribosomal frameshifting.

It is found in the carboxysome. Functionally, required for alpha-carboxysome (Cb) assembly, mediates interaction between RuBisCO and the Cb shell. The protein is probably highly flexible. The C-terminal repeats act as the encapsulation signal to target proteins to the Cb; they are necessary and sufficient to target both CsoS2 and foreign proteins to the Cb. The N-terminal repeats of this protein bind simultaneously to both subunits of RuBisCO. Probably also interacts with the major shell proteins (CsoS1); that interaction would increase the local concentration of CsoS2 so that it can condense RuBisCO and full carboxysomes can be formed. There are estimated to be 163 CsoS2 proteins per carboxysome; unlike H.neapolitanus only 1 form is seen. The protein is Carboxysome assembly protein CsoS2 of Prochlorococcus marinus subsp. pastoris (strain CCMP1986 / NIES-2087 / MED4).